The chain runs to 88 residues: Small ribosomal subunit protein bS20 (88 aa).

The interval 1-27 (MANTPQAKKRARQNEKARKHNASMRSM) is disordered. The span at 7 to 22 (AKKRARQNEKARKHNA) shows a compositional bias: basic residues.

Belongs to the bacterial ribosomal protein bS20 family.

Functionally, binds directly to 16S ribosomal RNA. The sequence is that of Small ribosomal subunit protein bS20 from Cellvibrio japonicus (strain Ueda107) (Pseudomonas fluorescens subsp. cellulosa).